The chain runs to 97 residues: Protein RnfH (97 aa).

It belongs to the UPF0125 (RnfH) family.

This Aliivibrio salmonicida (strain LFI1238) (Vibrio salmonicida (strain LFI1238)) protein is Protein RnfH.